The sequence spans 99 residues: Aspartyl/glutamyl-tRNA(Asn/Gln) amidotransferase subunit C (99 aa).

This sequence belongs to the GatC family. As to quaternary structure, heterotrimer of A, B and C subunits.

The enzyme catalyses L-glutamyl-tRNA(Gln) + L-glutamine + ATP + H2O = L-glutaminyl-tRNA(Gln) + L-glutamate + ADP + phosphate + H(+). It carries out the reaction L-aspartyl-tRNA(Asn) + L-glutamine + ATP + H2O = L-asparaginyl-tRNA(Asn) + L-glutamate + ADP + phosphate + 2 H(+). Allows the formation of correctly charged Asn-tRNA(Asn) or Gln-tRNA(Gln) through the transamidation of misacylated Asp-tRNA(Asn) or Glu-tRNA(Gln) in organisms which lack either or both of asparaginyl-tRNA or glutaminyl-tRNA synthetases. The reaction takes place in the presence of glutamine and ATP through an activated phospho-Asp-tRNA(Asn) or phospho-Glu-tRNA(Gln). The chain is Aspartyl/glutamyl-tRNA(Asn/Gln) amidotransferase subunit C from Sulfurihydrogenibium sp. (strain YO3AOP1).